Reading from the N-terminus, the 208-residue chain is 2-phospho-L-lactate guanylyltransferase (208 aa).

The protein belongs to the CofC family. In terms of assembly, homodimer.

It carries out the reaction (2S)-2-phospholactate + GTP + H(+) = (2S)-lactyl-2-diphospho-5'-guanosine + diphosphate. It functions in the pathway cofactor biosynthesis; coenzyme F420 biosynthesis. Its function is as follows. Guanylyltransferase that catalyzes the activation of (2S)-2-phospholactate (2-PL) as (2S)-lactyl-2-diphospho-5'-guanosine, via the condensation of 2-PL with GTP. It is involved in the biosynthesis of coenzyme F420, a hydride carrier cofactor. This Methanosarcina barkeri (strain Fusaro / DSM 804) protein is 2-phospho-L-lactate guanylyltransferase.